The primary structure comprises 253 residues: Imidazole glycerol phosphate synthase subunit HisF (253 aa).

Catalysis depends on residues Asp11 and Asp130.

It belongs to the HisA/HisF family. In terms of assembly, heterodimer of HisH and HisF.

The protein resides in the cytoplasm. It carries out the reaction 5-[(5-phospho-1-deoxy-D-ribulos-1-ylimino)methylamino]-1-(5-phospho-beta-D-ribosyl)imidazole-4-carboxamide + L-glutamine = D-erythro-1-(imidazol-4-yl)glycerol 3-phosphate + 5-amino-1-(5-phospho-beta-D-ribosyl)imidazole-4-carboxamide + L-glutamate + H(+). It functions in the pathway amino-acid biosynthesis; L-histidine biosynthesis; L-histidine from 5-phospho-alpha-D-ribose 1-diphosphate: step 5/9. In terms of biological role, IGPS catalyzes the conversion of PRFAR and glutamine to IGP, AICAR and glutamate. The HisF subunit catalyzes the cyclization activity that produces IGP and AICAR from PRFAR using the ammonia provided by the HisH subunit. In Clostridium botulinum (strain 657 / Type Ba4), this protein is Imidazole glycerol phosphate synthase subunit HisF.